Consider the following 207-residue polypeptide: Probable mediator of RNA polymerase II transcription subunit 19b (207 aa).

A disordered region spans residues 99–207 (DTAPVELPPA…SSKLDEMGAM (109 aa)). Residues 127–152 (DRKHRKHKDKKEKDREHKKHKHKHKD) show a composition bias toward basic residues. Positions 153–167 (RIKDKDKDKDRDKKK) are enriched in basic and acidic residues. Basic residues predominate over residues 168-179 (EKSGHHDKKRKN).

The protein belongs to the plant Mediator complex subunit 19 family. As to quaternary structure, component of the Mediator complex.

It localises to the nucleus. Its function is as follows. Component of the Mediator complex, a coactivator involved in the regulated transcription of nearly all RNA polymerase II-dependent genes. Mediator functions as a bridge to convey information from gene-specific regulatory proteins to the basal RNA polymerase II transcription machinery. The Mediator complex, having a compact conformation in its free form, is recruited to promoters by direct interactions with regulatory proteins and serves for the assembly of a functional preinitiation complex with RNA polymerase II and the general transcription factors. The protein is Probable mediator of RNA polymerase II transcription subunit 19b (MED19B) of Arabidopsis thaliana (Mouse-ear cress).